Consider the following 831-residue polypeptide: MTDNQEIKPKKLTLGNSKLSLNKSFDSLTGAQSFVNAKSKTLVEVRKSSTGSATTLSLNKERNSLDQTVIDANKEEFNRRLSILKKAAEQSQLNDPSKISTLSKLASINQSANSKIEPLETDKEVEQKQQNTEDNKVEVSAKIVQDDKDIPSQIPKKKEETFVKSPLVGMRTRYGIESEKELDKTADSKIIAPKIKLEEPKKIKKADLFNMLSDDESGSCRTRSLASIKRAREKEKRKLASQAPEKVYREVTIPEVIGVGDLANAMSERVADVIKELMKLGILANASQTIDADTAELVATNLGHTVKRVQESDVENVLISDDKVEDLRTRAPVVTVMGHVDHGKTSLLDALKSTDVAAGELGGITQHIGAYRVTLADGRAITFIDTPGHEAFSEMRSRGAKVTDIVIIVVAADDGIKTQTVEAINHAKAAGVPIIVAINKIDKPDIDIERVKNELYVHEIIGEEVGGDVMIIPISALKKINLDKLEEAILLIAEMQDLKANPFGSAAGVVIESKIEQGRGTLTTILVQRGTLRNSDIIIAGTAYGKVKKMTNDKGLEIVEATPSVPVEIQGLNEVPFAGDKFNIVQNEKQAKDIAEYRMRLAKEKKISIAPRSSLEDLFLKASGNSKIKELPLIIKGDVQGSVEAISGSLLKLPSDEIKLRILHSGVGPITESDVSLAHASSAIIVSFNVRAGANALTAAEKEKVDIRYYSIIYHLIDDIKAIMSGMLEPIVREQYIGSAEIRQIFNITKVGKIAGSYVTKGIIKKGAGVRLLRDNVVIHEGKLKTLKRFKDEVKEVREGYECGIAFENYEDIREGDTVEVFELIQEQRQL.

The region spanning 329-499 is the tr-type G domain; the sequence is TRAPVVTVMG…LLIAEMQDLK (171 aa). The G1 stretch occupies residues 338–345; the sequence is GHVDHGKT. 338–345 is a binding site for GTP; that stretch reads GHVDHGKT. The tract at residues 363 to 367 is G2; sequence GITQH. A G3 region spans residues 385–388; the sequence is DTPG. GTP-binding positions include 385–389 and 439–442; these read DTPGH and NKID. Residues 439-442 are G4; sequence NKID. The G5 stretch occupies residues 475-477; sequence SAL.

It belongs to the TRAFAC class translation factor GTPase superfamily. Classic translation factor GTPase family. IF-2 subfamily.

The protein resides in the cytoplasm. One of the essential components for the initiation of protein synthesis. Protects formylmethionyl-tRNA from spontaneous hydrolysis and promotes its binding to the 30S ribosomal subunits. Also involved in the hydrolysis of GTP during the formation of the 70S ribosomal complex. The protein is Translation initiation factor IF-2 of Rickettsia rickettsii (strain Iowa).